We begin with the raw amino-acid sequence, 118 residues long: Small ribosomal subunit protein uS13 (118 aa).

The disordered stretch occupies residues 94 to 118 (SLPLRGQRTKTNARTRKGPRKPIKK).

The protein belongs to the universal ribosomal protein uS13 family. In terms of assembly, part of the 30S ribosomal subunit. Forms a loose heterodimer with protein S19. Forms two bridges to the 50S subunit in the 70S ribosome.

Functionally, located at the top of the head of the 30S subunit, it contacts several helices of the 16S rRNA. In the 70S ribosome it contacts the 23S rRNA (bridge B1a) and protein L5 of the 50S subunit (bridge B1b), connecting the 2 subunits; these bridges are implicated in subunit movement. Contacts the tRNAs in the A and P-sites. This Shewanella oneidensis (strain ATCC 700550 / JCM 31522 / CIP 106686 / LMG 19005 / NCIMB 14063 / MR-1) protein is Small ribosomal subunit protein uS13.